Here is a 340-residue protein sequence, read N- to C-terminus: Anthranilate phosphoribosyltransferase (340 aa).

5-phospho-alpha-D-ribose 1-diphosphate is bound by residues glycine 84, 87–88 (GD), threonine 92, 94–97 (NIST), 112–120 (KHGSRSVSS), and serine 124. Glycine 84 is an anthranilate binding site. Mg(2+) is bound at residue serine 96. Arginine 170 contacts anthranilate. Residues aspartate 228 and glutamate 229 each coordinate Mg(2+).

The protein belongs to the anthranilate phosphoribosyltransferase family. As to quaternary structure, homodimer. Mg(2+) is required as a cofactor.

It carries out the reaction N-(5-phospho-beta-D-ribosyl)anthranilate + diphosphate = 5-phospho-alpha-D-ribose 1-diphosphate + anthranilate. It participates in amino-acid biosynthesis; L-tryptophan biosynthesis; L-tryptophan from chorismate: step 2/5. Its function is as follows. Catalyzes the transfer of the phosphoribosyl group of 5-phosphorylribose-1-pyrophosphate (PRPP) to anthranilate to yield N-(5'-phosphoribosyl)-anthranilate (PRA). The protein is Anthranilate phosphoribosyltransferase of Psychromonas ingrahamii (strain DSM 17664 / CCUG 51855 / 37).